We begin with the raw amino-acid sequence, 1199 residues long: DNA-directed RNA polymerase subunit beta' (1199 aa).

4 residues coordinate Zn(2+): C60, C62, C75, and C78. The Mg(2+) site is built by D449, D451, and D453. Zn(2+)-binding residues include C818, C892, C899, and C902.

The protein belongs to the RNA polymerase beta' chain family. RNAP is composed of a core of 2 alpha, a beta and a beta' subunit. The core is associated with a delta subunit, and at least one of epsilon or omega. When a sigma factor is associated with the core the holoenzyme is formed, which can initiate transcription. Mg(2+) serves as cofactor. The cofactor is Zn(2+).

The catalysed reaction is RNA(n) + a ribonucleoside 5'-triphosphate = RNA(n+1) + diphosphate. DNA-dependent RNA polymerase catalyzes the transcription of DNA into RNA using the four ribonucleoside triphosphates as substrates. This chain is DNA-directed RNA polymerase subunit beta', found in Bacillus subtilis (strain 168).